Here is a 105-residue protein sequence, read N- to C-terminus: Protein yippee-like At4g27740 (105 aa).

A Yippee domain is found at 8 to 105 (PTYFCRNCEN…IEKLKLTKRY (98 aa)). Zn(2+)-binding residues include C12, C15, C68, and C71.

It belongs to the yippee family.

This chain is Protein yippee-like At4g27740, found in Arabidopsis thaliana (Mouse-ear cress).